Here is a 169-residue protein sequence, read N- to C-terminus: S-ribosylhomocysteine lyase (169 aa).

Fe cation-binding residues include histidine 54, histidine 58, and cysteine 128.

It belongs to the LuxS family. In terms of assembly, homodimer. Fe cation serves as cofactor.

It carries out the reaction S-(5-deoxy-D-ribos-5-yl)-L-homocysteine = (S)-4,5-dihydroxypentane-2,3-dione + L-homocysteine. Its function is as follows. Involved in the synthesis of autoinducer 2 (AI-2) which is secreted by bacteria and is used to communicate both the cell density and the metabolic potential of the environment. The regulation of gene expression in response to changes in cell density is called quorum sensing. Catalyzes the transformation of S-ribosylhomocysteine (RHC) to homocysteine (HC) and 4,5-dihydroxy-2,3-pentadione (DPD). The polypeptide is S-ribosylhomocysteine lyase (Shewanella frigidimarina (strain NCIMB 400)).